The primary structure comprises 189 residues: Mediator of RNA polymerase II transcription subunit 30 (189 aa).

Positions 138–178 (SPESEDEIEKLEEQALSLRMEIAKKNVHVKELIDKLRELIA) form a coiled coil.

This sequence belongs to the plant Mediator complex subunit 30 family. Component of the Mediator complex.

It is found in the nucleus. Functionally, component of the Mediator complex, a coactivator involved in the regulated transcription of nearly all RNA polymerase II-dependent genes. Mediator functions as a bridge to convey information from gene-specific regulatory proteins to the basal RNA polymerase II transcription machinery. The Mediator complex, having a compact conformation in its free form, is recruited to promoters by direct interactions with regulatory proteins and serves for the assembly of a functional preinitiation complex with RNA polymerase II and the general transcription factors. The sequence is that of Mediator of RNA polymerase II transcription subunit 30 (MED30) from Arabidopsis thaliana (Mouse-ear cress).